Reading from the N-terminus, the 319-residue chain is Annexin A5 (319 aa).

Position 2 is an N-acetylalanine (alanine 2). Annexin repeat units lie at residues 13-84, 85-156, 168-240, and 244-315; these read FDGR…ALMK, PSRL…VLLQ, AQVE…AVVK, and SIPA…LLCG. Residue lysine 27 forms a Glycyl lysine isopeptide (Lys-Gly) (interchain with G-Cter in SUMO1); alternate linkage. A Glycyl lysine isopeptide (Lys-Gly) (interchain with G-Cter in SUMO2); alternate cross-link involves residue lysine 27. Serine 35 carries the post-translational modification Phosphoserine. 5 positions are modified to N6-acetyllysine: lysine 68, lysine 74, lysine 77, lysine 95, and lysine 99. At lysine 288 the chain carries N6-succinyllysine. A [IL]-x-C-x-x-[DE] motif motif is present at residues 312-318; it reads LLCGGED.

The protein belongs to the annexin family. As to quaternary structure, monomer. Binds ATRX, EIF5B and DNMT1. In terms of processing, S-nitrosylation is induced by interferon-gamma and oxidatively-modified low-densitity lipoprotein (LDL(ox)) possibly implicating the iNOS-S100A8/9 transnitrosylase complex.

Its function is as follows. This protein is an anticoagulant protein that acts as an indirect inhibitor of the thromboplastin-specific complex, which is involved in the blood coagulation cascade. This chain is Annexin A5 (Anxa5), found in Rattus norvegicus (Rat).